The primary structure comprises 241 residues: 1-Cys peroxiredoxin (241 aa).

One can recognise a Thioredoxin domain in the interval 33–189 (LRIGDVVPDF…IIRILDSFQL (157 aa)). Cys75 acts as the Cysteine sulfenic acid (-SOH) intermediate in catalysis.

The protein belongs to the peroxiredoxin family. Prx6 subfamily. Homodimer.

It carries out the reaction a hydroperoxide + [thioredoxin]-dithiol = an alcohol + [thioredoxin]-disulfide + H2O. Thiol-specific peroxidase that catalyzes the reduction of hydrogen peroxide and organic hydroperoxides to water and alcohols, respectively. Plays a role in cell protection against oxidative stress by detoxifying peroxides. This chain is 1-Cys peroxiredoxin, found in Dictyostelium discoideum (Social amoeba).